We begin with the raw amino-acid sequence, 706 residues long: Dual specificity calcium/calmodulin-dependent 3',5'-cyclic nucleotide phosphodiesterase 1C (706 aa).

Residue M1 is modified to N-acetylmethionine. Residues 123–146 (EKPRFKSIVHAVQAGIFVERMYRR) are calmodulin-binding. The PDEase domain maps to 151-528 (VGLSYPPAVI…ERWRAKVPKE (378 aa)). H228 acts as the Proton donor in catalysis. H232, H268, D269, and D376 together coordinate Zn(2+). D269 provides a ligand contact to Mg(2+). Disordered regions lie at residues 453-497 (LIDE…INNS) and 524-655 (KVPK…IKPP). 2 stretches are compositionally biased toward polar residues: residues 456–476 (ESSQTGGTGQRRSSLNSINSS) and 483–497 (VKSSGSDGSAPINNS). 3 stretches are compositionally biased toward basic and acidic residues: residues 524 to 554 (KVPKEEKAKKEAEEKARLAAEEKQKEMEAKS), 580 to 597 (RKGDNPRGKNSKGEKAGE), and 603 to 630 (DLKDGKNKADKKDHSNTGNESKKTDGTK). Residues 638-647 (APSTSSTSRI) are compositionally biased toward polar residues.

This sequence belongs to the cyclic nucleotide phosphodiesterase family. PDE1 subfamily. In terms of assembly, homodimer. The cofactor is Zn(2+). Requires Mg(2+) as cofactor. Highly expressed in testis and at moderate levels in heart. In terms of tissue distribution, expressed at a moderate level in brain, the cerebellum, testis, heart and olfactory epithelium. As to expression, highly expressed in olfactory epithelium and at very low levels, if any, in other tissues. In the cochlea, expressed in the inner and outer hair cells (at protein level). In the brain, highly expressed in the neurons of the granule layer of the cerebellum, some Purkinje cells, the central amygdaloid nucleus, and the interpolar spinal trigem nucleus and, at moderate levels, in the glomerular and external plexiform layer of the olfactory bulb as well as in parts of the caudate-putamen and olfactory tubercle.

Its subcellular location is the lysosome. It carries out the reaction a nucleoside 3',5'-cyclic phosphate + H2O = a nucleoside 5'-phosphate + H(+). The catalysed reaction is 3',5'-cyclic GMP + H2O = GMP + H(+). The enzyme catalyses 3',5'-cyclic AMP + H2O = AMP + H(+). Type I PDE are activated by the binding of calmodulin in the presence of Ca(2+). Different splice variants may have different sensitivities to Ca(2+). With respect to regulation, exhibits a higher sensitivity to Ca(2+) stimulation than isoforms 1 and 2. Its function is as follows. Calmodulin-dependent cyclic nucleotide phosphodiesterase with a dual specificity for cAMP and cGMP, which are key regulators of many important physiological processes. Exhibits high affinity for both cAMP and cGMP. Modulates the amplitude and duration of the cAMP signal in sensory cilia in response to odorant stimulation, hence contributing to the generation of action potentials. Regulates smooth muscle cell proliferation. Regulates the stability of growth factor receptors, including PDGFRB. The polypeptide is Dual specificity calcium/calmodulin-dependent 3',5'-cyclic nucleotide phosphodiesterase 1C (Mus musculus (Mouse)).